A 242-amino-acid chain; its full sequence is MLIIPAIDIYKSKVVRMETGKKEKIILEFDNPIDLAKYWEKKGAKALHLIDLQSAIDGIDENKNIIREIIKNVSIPVEVGGGYRDKEKIEEAINWGVWRVIVSSILEKDLGYLSDLFSKYKEKIIPSIDWYDGRVGIKGWQDFVEWRNIKDKLDLLRVKEVIFTDISRDGTLRGINVENIKTFLRLHDYDIWIAGGISSIEDIIKIKNIWKETERIKGVIIGRALLEGRINWEEAEDIINAG.

The active-site Proton acceptor is Asp-8. Asp-129 acts as the Proton donor in catalysis.

It belongs to the HisA/HisF family.

It localises to the cytoplasm. It catalyses the reaction 1-(5-phospho-beta-D-ribosyl)-5-[(5-phospho-beta-D-ribosylamino)methylideneamino]imidazole-4-carboxamide = 5-[(5-phospho-1-deoxy-D-ribulos-1-ylimino)methylamino]-1-(5-phospho-beta-D-ribosyl)imidazole-4-carboxamide. It participates in amino-acid biosynthesis; L-histidine biosynthesis; L-histidine from 5-phospho-alpha-D-ribose 1-diphosphate: step 4/9. In Dictyoglomus turgidum (strain DSM 6724 / Z-1310), this protein is 1-(5-phosphoribosyl)-5-[(5-phosphoribosylamino)methylideneamino] imidazole-4-carboxamide isomerase.